The primary structure comprises 436 residues: Phosphomethylpyrimidine synthase (436 aa).

Substrate contacts are provided by residues asparagine 68, methionine 97, tyrosine 126, histidine 166, 188-190 (SRG), 229-232 (DGFR), and glutamate 268. Histidine 272 serves as a coordination point for Zn(2+). Position 295 (tyrosine 295) interacts with substrate. Histidine 336 serves as a coordination point for Zn(2+). The [4Fe-4S] cluster site is built by cysteine 412, cysteine 415, and cysteine 419.

It belongs to the ThiC family. Homodimer. It depends on [4Fe-4S] cluster as a cofactor.

The enzyme catalyses 5-amino-1-(5-phospho-beta-D-ribosyl)imidazole + S-adenosyl-L-methionine = 4-amino-2-methyl-5-(phosphooxymethyl)pyrimidine + CO + 5'-deoxyadenosine + formate + L-methionine + 3 H(+). Its pathway is cofactor biosynthesis; thiamine diphosphate biosynthesis. In terms of biological role, catalyzes the synthesis of the hydroxymethylpyrimidine phosphate (HMP-P) moiety of thiamine from aminoimidazole ribotide (AIR) in a radical S-adenosyl-L-methionine (SAM)-dependent reaction. This chain is Phosphomethylpyrimidine synthase, found in Geobacter metallireducens (strain ATCC 53774 / DSM 7210 / GS-15).